Consider the following 56-residue polypeptide: PI-stichotoxin-Hcr2f (56 aa).

In terms of domain architecture, BPTI/Kunitz inhibitor spans Cys-4–Cys-54. 3 cysteine pairs are disulfide-bonded: Cys-4–Cys-54, Cys-13–Cys-37, and Cys-29–Cys-50.

Belongs to the venom Kunitz-type family. Sea anemone type 2 potassium channel toxin subfamily. Post-translationally, contains 3 disulfide bonds.

The protein resides in the secreted. Its subcellular location is the nematocyst. Dual-function toxin that inhibits both serine proteases and voltage-gated potassium channels. Has potent activity on both trypsin (Ki=28 nM) and chymotrypsin (Kd=1.8 nM). Shows inhibitory activity against 4 of the 7 potassium channels tested (rKv1.1/KCNA1; IC(50)=142.6 nM, hKv1.3/KCNA3; IC(50)=40.7 nM, rKv1.6/KCNA6; IC(50)=154.9 nM and drosophila Shaker; IC(50)=433.1 nM). Has an anti-inflammatory effect in LPS-activated macrophages in vitro, specifically reducing release of TNF and IL6 but not nitric oxide and reducing expression of IL1B precursor. In contrast to some paralogs, this protein decreases reactive oxygen species (ROS) level in the oxidative stress agent 6-hydroxydopamine (6-OHDA)-induced neurotoxicity model, but does not show cytoprotective activity on neuroblastoma cells. This protein also shows a weak free-radical scavenging activity. In vivo, when tested in a mice model of acute local inflammation, it reduces paw edema during 24 hours. In addition, it also reduces the synthesis of TNF in this model. The protein is PI-stichotoxin-Hcr2f of Radianthus crispa (Leathery sea anemone).